Reading from the N-terminus, the 181-residue chain is Achaete-scute homolog 3 (181 aa).

Positions 93–106 (AFTRKRNERERQRV) are basic motif. One can recognise a bHLH domain in the interval 93 to 145 (AFTRKRNERERQRVKCVNEGYAQLRHHLPEEYLEKRLSKVETLRAAIKYINYL). The helix-loop-helix motif stretch occupies residues 107 to 145 (KCVNEGYAQLRHHLPEEYLEKRLSKVETLRAAIKYINYL).

Efficient DNA binding requires dimerization with another bHLH protein. As to expression, widely expressed in fetal and adult tissues.

It localises to the nucleus. In terms of biological role, transcriptional repressor. Inhibits myogenesis. Plays a role in progenitor cells which differentiate into ductal and acinar, but not myoepithelial, cell lineages in the salivary glands. Involved in the functions of the microvillar cells and Bowman's glands and probably, in a non-cell-autonomous manner, in the development or regeneration of a complete olfactory epithelium (OE). The protein is Achaete-scute homolog 3 of Homo sapiens (Human).